The following is a 484-amino-acid chain: Vanillin dehydrogenase (484 aa).

NADP(+)-binding positions include 156 to 157 (WN), 180 to 183 (KPAS), and 234 to 235 (GS). Residues K180 and 234–239 (GSTPVG) contribute to the NAD(+) site. E258 serves as the catalytic Proton acceptor. Residue L259 participates in NADP(+) binding. The Nucleophile role is filled by C292. NAD(+)-binding residues include Q339 and E386. E386 contacts NADP(+).

Belongs to the aldehyde dehydrogenase family. As to quaternary structure, exists as a homodimer, homotrimer and homotetramer.

The enzyme catalyses vanillin + NAD(+) + H2O = vanillate + NADH + 2 H(+). The catalysed reaction is vanillin + NADP(+) + H2O = vanillate + NADPH + 2 H(+). It catalyses the reaction 3,4-dihydroxybenzaldehyde + NAD(+) + H2O = 3,4-dihydroxybenzoate + NADH + 2 H(+). It carries out the reaction 3,4-dihydroxybenzaldehyde + NADP(+) + H2O = 3,4-dihydroxybenzoate + NADPH + 2 H(+). The enzyme catalyses 4-hydroxybenzaldehyde + NAD(+) + H2O = 4-hydroxybenzoate + NADH + 2 H(+). The catalysed reaction is 4-hydroxybenzaldehyde + NADP(+) + H2O = 4-hydroxybenzoate + NADPH + 2 H(+). Catalyzes oxidation of vanillin to vanillate. Also oxidizes 3,4-dihydroxybenzaldehyde and 4-hydroxybenzaldehyde significantly. Other aromatic aldehyde substrates in the order of decreasing activity include 3-hydroxybenzaldehyde, 4-nitrobenzaldehyde, terephthalaldehyde, 2,4-dichlorobenzaldehyde, benzaldehyde and 3-phenylpropanal. Low activity with phthalaldehyde, cinnamaldehyde and syringaldehyde. No activity with phenylacetaldehyde, formaldehyde or aldehyde. Active with both NAD(+) and NADP(+). Involved in the degradation pathway of lignin-derived aromatic compounds of plant cell walls. Catalyzes the conversion of vanillin to vanillate due to toxicity of vanillin to the cells. The protein is Vanillin dehydrogenase of Corynebacterium glutamicum (strain ATCC 13032 / DSM 20300 / JCM 1318 / BCRC 11384 / CCUG 27702 / LMG 3730 / NBRC 12168 / NCIMB 10025 / NRRL B-2784 / 534).